A 428-amino-acid polypeptide reads, in one-letter code: Probable G-protein coupled receptor (428 aa).

Residues 1-46 (MMADKTSPMITSDHSISNFSTGLFGPHPTVPPDVGVVTSSQSQMKD) lie on the Extracellular side of the membrane. Asn-18 is a glycosylation site (N-linked (GlcNAc...) asparagine). The chain crosses the membrane as a helical span at residues 47 to 67 (LFGLFCMVTLNLIALLANTGV). The Cytoplasmic segment spans residues 68–93 (MVAIARAPHLKKFAFVCHLCAVDVLC). The chain crosses the membrane as a helical span at residues 94 to 114 (AILLMPLGIISSSPFFGTVVF). Over 115-120 (TILECQ) the chain is Extracellular. The helical transmembrane segment at 121 to 141 (VYIFLNVFLIWLSILTITAIS) threads the bilayer. Residues 142–162 (VERYFYIVHPMRYEVKMTINL) are Cytoplasmic-facing. Residues 163–183 (VIGVMLLIWFKSLLLALVTLF) traverse the membrane as a helical segment. Residues 184-210 (GWPPYGHQSSIAASHCSLHASHSRLRG) lie on the Extracellular side of the membrane. A helical membrane pass occupies residues 211–231 (VFAVLFCVICFLAPVVVIFSV). Over 232 to 293 (YSAVYKVARS…PERAFSGGKA (62 aa)) the chain is Cytoplasmic. A helical membrane pass occupies residues 294–314 (ALTLAFIVGQFLVCWLPFFIF). The Extracellular segment spans residues 315-428 (HLQMSLTGSM…IPGQIPEEQA (114 aa)). The segment covering 398–414 (SETHPSFANSNPRNMEN) has biased composition (polar residues). Residues 398–428 (SETHPSFANSNPRNMENQAHKIPGQIPEEQA) are disordered.

Belongs to the G-protein coupled receptor 1 family.

It localises to the cell membrane. This is Probable G-protein coupled receptor from Oryzias latipes (Japanese rice fish).